The chain runs to 434 residues: MHLGCEKNLVDTEHMMGLLDQGGYSISTNPSEASLVVVNTCSFIQDAREESVRVLVGLAEQDKEIIIAGCLAQHFQEELLQSIPEAKAIIGTGDYQNILNVLQRIEQGEIVNQVSNNPTFVGDEKLPRFRTTGKAVAYLKIAEGCDYSCAFCIIPKLRGMQRSRSIESIVAEANQLAKQGVKELILISQITTNYGLDLYGRPCLADLLRELGDVEIPWIRVHYAYPTGLTSEVIKAFREVPNLLPYLDLPLQHSHPDVLRLMNRPWQLDLNASLLDRIRSELPDAIFRTSLIVGFPGETEEHFNHLVSFVQTQQFDHIGVFTFSSEAGTKAASLANQIPFSVAEARKDKIISIQQPIAELKNQNWIGRTVDVLIEREDKDSAEFVGRCARFSPEVDGFVRLQINNTFTNQLNIGMMTPALITGADLYDLTGQVV.

One can recognise an MTTase N-terminal domain in the interval 1-107 (MHLGCEKNLV…ILNVLQRIEQ (107 aa)). [4Fe-4S] cluster contacts are provided by Cys-5, Cys-41, Cys-70, Cys-145, Cys-149, and Cys-152. The Radical SAM core domain occupies 131–360 (TTGKAVAYLK…ISIQQPIAEL (230 aa)). The 72-residue stretch at 363 to 434 (QNWIGRTVDV…DLYDLTGQVV (72 aa)) folds into the TRAM domain.

It belongs to the methylthiotransferase family. RimO subfamily. It depends on [4Fe-4S] cluster as a cofactor.

The protein resides in the cytoplasm. It carries out the reaction L-aspartate(89)-[ribosomal protein uS12]-hydrogen + (sulfur carrier)-SH + AH2 + 2 S-adenosyl-L-methionine = 3-methylsulfanyl-L-aspartate(89)-[ribosomal protein uS12]-hydrogen + (sulfur carrier)-H + 5'-deoxyadenosine + L-methionine + A + S-adenosyl-L-homocysteine + 2 H(+). Functionally, catalyzes the methylthiolation of an aspartic acid residue of ribosomal protein uS12. The polypeptide is Ribosomal protein uS12 methylthiotransferase RimO (Prochlorococcus marinus (strain SARG / CCMP1375 / SS120)).